The chain runs to 284 residues: Tropomyosin-1 (284 aa).

2 disordered regions span residues 1–26 (MDAIKKKMQAMKLEKDNAMDKADTCE) and 96–124 (EEDLEKSEERSGTAQQKLLEAQQSADENN). Residues 1–276 (MDAIKKKMQA…YKSLADEMDS (276 aa)) adopt a coiled-coil conformation. Residues 12 to 26 (KLEKDNAMDKADTCE) are compositionally biased toward basic and acidic residues. The span at 107–121 (GTAQQKLLEAQQSAD) shows a compositional bias: polar residues.

It belongs to the tropomyosin family. As to quaternary structure, homodimer.

Functionally, tropomyosin, in association with the troponin complex, plays a central role in the calcium dependent regulation of muscle contraction. This chain is Tropomyosin-1, found in Bombyx mori (Silk moth).